Consider the following 352-residue polypeptide: Phosphoribosylformylglycinamidine cyclo-ligase (352 aa).

The protein belongs to the AIR synthase family.

The protein localises to the cytoplasm. It carries out the reaction 2-formamido-N(1)-(5-O-phospho-beta-D-ribosyl)acetamidine + ATP = 5-amino-1-(5-phospho-beta-D-ribosyl)imidazole + ADP + phosphate + H(+). It participates in purine metabolism; IMP biosynthesis via de novo pathway; 5-amino-1-(5-phospho-D-ribosyl)imidazole from N(2)-formyl-N(1)-(5-phospho-D-ribosyl)glycinamide: step 2/2. The chain is Phosphoribosylformylglycinamidine cyclo-ligase from Nitrosospira multiformis (strain ATCC 25196 / NCIMB 11849 / C 71).